The sequence spans 68 residues: Large ribosomal subunit protein bL35 (68 aa).

This sequence belongs to the bacterial ribosomal protein bL35 family.

The protein is Large ribosomal subunit protein bL35 of Aster yellows witches'-broom phytoplasma (strain AYWB).